The chain runs to 1183 residues: DNA-directed RNA polymerase subunit beta (1183 aa).

The protein belongs to the RNA polymerase beta chain family. The RNAP catalytic core consists of 2 alpha, 1 beta, 1 beta' and 1 omega subunit. When a sigma factor is associated with the core the holoenzyme is formed, which can initiate transcription.

It carries out the reaction RNA(n) + a ribonucleoside 5'-triphosphate = RNA(n+1) + diphosphate. Functionally, DNA-dependent RNA polymerase catalyzes the transcription of DNA into RNA using the four ribonucleoside triphosphates as substrates. The polypeptide is DNA-directed RNA polymerase subunit beta (Staphylococcus aureus (strain MRSA252)).